We begin with the raw amino-acid sequence, 253 residues long: Phosphate import ATP-binding protein PstB (253 aa).

Residues 7-248 form the ABC transporter domain; sequence MHSKGLDFFY…PGNKQTEDYI (242 aa). 39–46 lines the ATP pocket; it reads GPSGCGKS.

The protein belongs to the ABC transporter superfamily. Phosphate importer (TC 3.A.1.7) family. As to quaternary structure, the complex is composed of two ATP-binding proteins (PstB), two transmembrane proteins (PstC and PstA) and a solute-binding protein (PstS).

Its subcellular location is the cell inner membrane. It catalyses the reaction phosphate(out) + ATP + H2O = ADP + 2 phosphate(in) + H(+). Part of the ABC transporter complex PstSACB involved in phosphate import. Responsible for energy coupling to the transport system. The polypeptide is Phosphate import ATP-binding protein PstB (Oleidesulfovibrio alaskensis (strain ATCC BAA-1058 / DSM 17464 / G20) (Desulfovibrio alaskensis)).